Consider the following 440-residue polypeptide: L-seryl-tRNA(Sec) selenium transferase (440 aa).

N6-(pyridoxal phosphate)lysine is present on Lys282.

It belongs to the SelA family. It depends on pyridoxal 5'-phosphate as a cofactor.

It is found in the cytoplasm. It catalyses the reaction L-seryl-tRNA(Sec) + selenophosphate + H(+) = L-selenocysteinyl-tRNA(Sec) + phosphate. It participates in aminoacyl-tRNA biosynthesis; selenocysteinyl-tRNA(Sec) biosynthesis; selenocysteinyl-tRNA(Sec) from L-seryl-tRNA(Sec) (bacterial route): step 1/1. Functionally, converts seryl-tRNA(Sec) to selenocysteinyl-tRNA(Sec) required for selenoprotein biosynthesis. The polypeptide is L-seryl-tRNA(Sec) selenium transferase (Campylobacter jejuni (strain RM1221)).